A 193-amino-acid polypeptide reads, in one-letter code: Holliday junction branch migration complex subunit RuvA (193 aa).

Residues 1-64 (MIGRIAGVLL…EDAHLLYGFG (64 aa)) are domain I. The segment at 65–139 (TAEERSTFRE…GKIGADLGAM (75 aa)) is domain II. Positions 139–143 (MAGAA) are flexible linker. Residues 144–193 (SASDHASDILNALLALGYSEKEALAAVKNVPAGTGVSEGIKLALKALSKG) are domain III.

This sequence belongs to the RuvA family. As to quaternary structure, homotetramer. Forms an RuvA(8)-RuvB(12)-Holliday junction (HJ) complex. HJ DNA is sandwiched between 2 RuvA tetramers; dsDNA enters through RuvA and exits via RuvB. An RuvB hexamer assembles on each DNA strand where it exits the tetramer. Each RuvB hexamer is contacted by two RuvA subunits (via domain III) on 2 adjacent RuvB subunits; this complex drives branch migration. In the full resolvosome a probable DNA-RuvA(4)-RuvB(12)-RuvC(2) complex forms which resolves the HJ.

It is found in the cytoplasm. Functionally, the RuvA-RuvB-RuvC complex processes Holliday junction (HJ) DNA during genetic recombination and DNA repair, while the RuvA-RuvB complex plays an important role in the rescue of blocked DNA replication forks via replication fork reversal (RFR). RuvA specifically binds to HJ cruciform DNA, conferring on it an open structure. The RuvB hexamer acts as an ATP-dependent pump, pulling dsDNA into and through the RuvAB complex. HJ branch migration allows RuvC to scan DNA until it finds its consensus sequence, where it cleaves and resolves the cruciform DNA. The sequence is that of Holliday junction branch migration complex subunit RuvA from Paraburkholderia xenovorans (strain LB400).